A 441-amino-acid polypeptide reads, in one-letter code: Proline--tRNA ligase (441 aa).

It belongs to the class-II aminoacyl-tRNA synthetase family. ProS type 2 subfamily. In terms of assembly, homodimer.

Its subcellular location is the cytoplasm. It catalyses the reaction tRNA(Pro) + L-proline + ATP = L-prolyl-tRNA(Pro) + AMP + diphosphate. Functionally, catalyzes the attachment of proline to tRNA(Pro) in a two-step reaction: proline is first activated by ATP to form Pro-AMP and then transferred to the acceptor end of tRNA(Pro). The protein is Proline--tRNA ligase of Methylorubrum populi (strain ATCC BAA-705 / NCIMB 13946 / BJ001) (Methylobacterium populi).